Here is a 287-residue protein sequence, read N- to C-terminus: ATP synthase gamma chain (287 aa).

The protein belongs to the ATPase gamma chain family. In terms of assembly, F-type ATPases have 2 components, CF(1) - the catalytic core - and CF(0) - the membrane proton channel. CF(1) has five subunits: alpha(3), beta(3), gamma(1), delta(1), epsilon(1). CF(0) has three main subunits: a, b and c.

The protein localises to the cell membrane. Its function is as follows. Produces ATP from ADP in the presence of a proton gradient across the membrane. The gamma chain is believed to be important in regulating ATPase activity and the flow of protons through the CF(0) complex. The protein is ATP synthase gamma chain of Geobacillus stearothermophilus (Bacillus stearothermophilus).